A 176-amino-acid polypeptide reads, in one-letter code: ATP-dependent protease subunit HslV (176 aa).

The active site involves Thr5. Na(+) is bound by residues Ser161, Cys164, and Thr167.

The protein belongs to the peptidase T1B family. HslV subfamily. As to quaternary structure, a double ring-shaped homohexamer of HslV is capped on each side by a ring-shaped HslU homohexamer. The assembly of the HslU/HslV complex is dependent on binding of ATP.

The protein resides in the cytoplasm. It carries out the reaction ATP-dependent cleavage of peptide bonds with broad specificity.. Allosterically activated by HslU binding. In terms of biological role, protease subunit of a proteasome-like degradation complex believed to be a general protein degrading machinery. In Thermoanaerobacter sp. (strain X514), this protein is ATP-dependent protease subunit HslV.